We begin with the raw amino-acid sequence, 113 residues long: Iron-sulfur cluster insertion protein ErpA (113 aa).

Residues cysteine 41, cysteine 105, and cysteine 107 each contribute to the iron-sulfur cluster site.

The protein belongs to the HesB/IscA family. In terms of assembly, homodimer. Iron-sulfur cluster serves as cofactor.

In terms of biological role, required for insertion of 4Fe-4S clusters for at least IspG. This Actinobacillus pleuropneumoniae serotype 5b (strain L20) protein is Iron-sulfur cluster insertion protein ErpA.